The following is a 969-amino-acid chain: UvrABC system protein A (969 aa).

32–39 contacts ATP; that stretch reads GLSGSGKS. The C4-type zinc finger occupies 258–286; it reads CPNGHPLAVDDLEPRSFSFNSPYGACPEC. ABC transporter domains follow at residues 316-599 and 619-948; these read WSAG…KDSI and VDRK…KFLA. 652 to 659 is an ATP binding site; that stretch reads GVSGSGKS. Residues 751-777 form a C4-type zinc finger; it reads CEACTGDGTIKIEMNFLPDVYVPCEVC.

It belongs to the ABC transporter superfamily. UvrA family. As to quaternary structure, forms a heterotetramer with UvrB during the search for lesions.

It is found in the cytoplasm. The UvrABC repair system catalyzes the recognition and processing of DNA lesions. UvrA is an ATPase and a DNA-binding protein. A damage recognition complex composed of 2 UvrA and 2 UvrB subunits scans DNA for abnormalities. When the presence of a lesion has been verified by UvrB, the UvrA molecules dissociate. The chain is UvrABC system protein A from Mycobacterium leprae (strain TN).